A 91-amino-acid chain; its full sequence is Lactococcin-B immunity protein (91 aa).

Imparts immunity to lactococcin-B to naturally sensitive host strains. This Lactococcus lactis subsp. cremoris (Streptococcus cremoris) protein is Lactococcin-B immunity protein (lciB).